The following is a 409-amino-acid chain: S-adenosylmethionine synthase (409 aa).

141 to 146 (GQGSAD) lines the ATP pocket.

Belongs to the AdoMet synthase 2 family. Mg(2+) serves as cofactor.

It catalyses the reaction L-methionine + ATP + H2O = S-adenosyl-L-methionine + phosphate + diphosphate. The protein operates within amino-acid biosynthesis; S-adenosyl-L-methionine biosynthesis; S-adenosyl-L-methionine from L-methionine: step 1/1. Catalyzes the formation of S-adenosylmethionine from methionine and ATP. The sequence is that of S-adenosylmethionine synthase from Hyperthermus butylicus (strain DSM 5456 / JCM 9403 / PLM1-5).